Here is a 321-residue protein sequence, read N- to C-terminus: D-alanine--D-alanine ligase (321 aa).

One can recognise an ATP-grasp domain in the interval 121–315 (RSWFLTNNIN…FTNLIEEIIK (195 aa)). Residue 147 to 199 (PVKRPYVIKPLTQGSSIGVEVIFEEDDFNFADYNFPYGYQVIIEQYIKGRELQ) coordinates ATP. Mg(2+) is bound by residues Glu-268, Glu-282, and Asn-284.

It belongs to the D-alanine--D-alanine ligase family. Mg(2+) is required as a cofactor. The cofactor is Mn(2+).

Its subcellular location is the cytoplasm. The catalysed reaction is 2 D-alanine + ATP = D-alanyl-D-alanine + ADP + phosphate + H(+). Its pathway is cell wall biogenesis; peptidoglycan biosynthesis. Cell wall formation. The polypeptide is D-alanine--D-alanine ligase (Rickettsia felis (strain ATCC VR-1525 / URRWXCal2) (Rickettsia azadi)).